The sequence spans 446 residues: MKRAFLSALSVGLAALFLTGPAQAQGNPGPLRIEITEGVIEPLPIAVPPFLAETPAASQFARDIAQVVADDLEGSGLFRAIPENAFISPITSFDSPVQYADWKAINAQALVTGSVSVASDGRLVVKFRLFDVFSDAPLGKGLQFVASQSSWRRMGHKVADAVYSRITGEGGYFDSRVVFVSETGPKNARQKRLAIMDYDGANVQFLTDSSAIVLAPRFSPTGDRVLYTSYATGRPQITLLDVNSVRSQGLGSAQGGEMSFAPRFSPDGRSVVFSLTNGGNSDIYRRDLSSGAQTRLTATPAIETAPSFSPDGRQIVFESDRSGSQQLYVMSATGGEARRISFGPGRYGTPVWSPRGDLIAFTKQNQGRFHIGVMRTDGSEERLLTSSFLDESPTWSPNGRVIMFTRETSGAGGAPSLYSVDISGRNLRRVPTPGAASDPAWSPLLP.

Residues 1–24 form the signal peptide; it reads MKRAFLSALSVGLAALFLTGPAQA.

The protein belongs to the TolB family. The Tol-Pal system is composed of five core proteins: the inner membrane proteins TolA, TolQ and TolR, the periplasmic protein TolB and the outer membrane protein Pal. They form a network linking the inner and outer membranes and the peptidoglycan layer.

The protein localises to the periplasm. Its function is as follows. Part of the Tol-Pal system, which plays a role in outer membrane invagination during cell division and is important for maintaining outer membrane integrity. In Dinoroseobacter shibae (strain DSM 16493 / NCIMB 14021 / DFL 12), this protein is Tol-Pal system protein TolB.